An 881-amino-acid chain; its full sequence is Protein translocase subunit SecA (881 aa).

Residues Gln-83, 101–105, and Asp-492 contribute to the ATP site; that span reads GEGKT.

Belongs to the SecA family.

The protein resides in the plastid. Its subcellular location is the chloroplast stroma. It localises to the chloroplast thylakoid membrane. The enzyme catalyses ATP + H2O + cellular proteinSide 1 = ADP + phosphate + cellular proteinSide 2.. Its function is as follows. Has a central role in coupling the hydrolysis of ATP to the transfer of proteins across the thylakoid membrane. The protein is Protein translocase subunit SecA of Emiliania huxleyi (Coccolithophore).